The sequence spans 239 residues: Octanoyltransferase (239 aa).

The 189-residue stretch at 48–236 folds into the BPL/LPL catalytic domain; that stretch reads EGGDELVWLV…AFETVFGETV (189 aa). Residues 87–94, 167–169, and 180–182 contribute to the substrate site; these read RGGEYTYH, ALG, and GLS. Cys198 serves as the catalytic Acyl-thioester intermediate.

The protein belongs to the LipB family.

The protein localises to the cytoplasm. It carries out the reaction octanoyl-[ACP] + L-lysyl-[protein] = N(6)-octanoyl-L-lysyl-[protein] + holo-[ACP] + H(+). It functions in the pathway protein modification; protein lipoylation via endogenous pathway; protein N(6)-(lipoyl)lysine from octanoyl-[acyl-carrier-protein]: step 1/2. Its function is as follows. Catalyzes the transfer of endogenously produced octanoic acid from octanoyl-acyl-carrier-protein onto the lipoyl domains of lipoate-dependent enzymes. Lipoyl-ACP can also act as a substrate although octanoyl-ACP is likely to be the physiological substrate. The chain is Octanoyltransferase from Rhizobium etli (strain CIAT 652).